A 366-amino-acid chain; its full sequence is Alanine racemase (366 aa).

Lysine 40 functions as the Proton acceptor; specific for D-alanine in the catalytic mechanism. Lysine 40 is modified (N6-(pyridoxal phosphate)lysine). A substrate-binding site is contributed by arginine 136. Residue tyrosine 263 is the Proton acceptor; specific for L-alanine of the active site. A substrate-binding site is contributed by methionine 310.

The protein belongs to the alanine racemase family. Pyridoxal 5'-phosphate serves as cofactor.

The enzyme catalyses L-alanine = D-alanine. The protein operates within amino-acid biosynthesis; D-alanine biosynthesis; D-alanine from L-alanine: step 1/1. In terms of biological role, catalyzes the interconversion of L-alanine and D-alanine. May also act on other amino acids. In Streptococcus agalactiae serotype Ia (strain ATCC 27591 / A909 / CDC SS700), this protein is Alanine racemase (alr).